The sequence spans 470 residues: Aromatic amino acid aminotransferase C569.07 (470 aa).

It belongs to the class-I pyridoxal-phosphate-dependent aminotransferase family. Pyridoxal 5'-phosphate serves as cofactor.

The protein localises to the cytoplasm. It carries out the reaction an aromatic L-alpha-amino acid + 2-oxoglutarate = an aromatic oxo-acid + L-glutamate. Its function is as follows. Has aromatic amino acid transaminase activity. The sequence is that of Aromatic amino acid aminotransferase C569.07 from Schizosaccharomyces pombe (strain 972 / ATCC 24843) (Fission yeast).